A 351-amino-acid polypeptide reads, in one-letter code: Holliday junction branch migration complex subunit RuvB (351 aa).

The interval His-4–Tyr-185 is large ATPase domain (RuvB-L). ATP-binding positions include Leu-24, Arg-25, Gly-66, Lys-69, Thr-70, Thr-71, Glu-132–Phe-134, Arg-175, Tyr-185, and Arg-222. Position 70 (Thr-70) interacts with Mg(2+). Residues Ser-186–Glu-256 form a small ATPAse domain (RuvB-S) region. Residues Asp-259–Pro-351 form a head domain (RuvB-H) region. Arg-314 and Arg-319 together coordinate DNA.

The protein belongs to the RuvB family. Homohexamer. Forms an RuvA(8)-RuvB(12)-Holliday junction (HJ) complex. HJ DNA is sandwiched between 2 RuvA tetramers; dsDNA enters through RuvA and exits via RuvB. An RuvB hexamer assembles on each DNA strand where it exits the tetramer. Each RuvB hexamer is contacted by two RuvA subunits (via domain III) on 2 adjacent RuvB subunits; this complex drives branch migration. In the full resolvosome a probable DNA-RuvA(4)-RuvB(12)-RuvC(2) complex forms which resolves the HJ.

The protein localises to the cytoplasm. It catalyses the reaction ATP + H2O = ADP + phosphate + H(+). Its function is as follows. The RuvA-RuvB-RuvC complex processes Holliday junction (HJ) DNA during genetic recombination and DNA repair, while the RuvA-RuvB complex plays an important role in the rescue of blocked DNA replication forks via replication fork reversal (RFR). RuvA specifically binds to HJ cruciform DNA, conferring on it an open structure. The RuvB hexamer acts as an ATP-dependent pump, pulling dsDNA into and through the RuvAB complex. RuvB forms 2 homohexamers on either side of HJ DNA bound by 1 or 2 RuvA tetramers; 4 subunits per hexamer contact DNA at a time. Coordinated motions by a converter formed by DNA-disengaged RuvB subunits stimulates ATP hydrolysis and nucleotide exchange. Immobilization of the converter enables RuvB to convert the ATP-contained energy into a lever motion, pulling 2 nucleotides of DNA out of the RuvA tetramer per ATP hydrolyzed, thus driving DNA branch migration. The RuvB motors rotate together with the DNA substrate, which together with the progressing nucleotide cycle form the mechanistic basis for DNA recombination by continuous HJ branch migration. Branch migration allows RuvC to scan DNA until it finds its consensus sequence, where it cleaves and resolves cruciform DNA. This Thermobifida fusca (strain YX) protein is Holliday junction branch migration complex subunit RuvB.